The primary structure comprises 60 residues: Temporin-CG1 (60 aa).

Positions 1–22 are cleaved as a signal peptide; that stretch reads MFTLKKSLLLLFFLATINLSLC. Positions 23–43 are cleaved as a propeptide — removed in mature form; the sequence is EQERNAEEERRDDDERNAEVE.

As to expression, expressed by the skin glands.

Its subcellular location is the secreted. Its function is as follows. Antimicrobial peptide active against a variety of Gram-positive and some Gram-negative bacterial strains. Has antifungal activity against a slime mold isolate. Has weak hemolytic activity against human erythrocytes. In Amolops chunganensis (Chungan torrent frog), this protein is Temporin-CG1.